The primary structure comprises 451 residues: Phosphoglucosamine mutase (451 aa).

The active-site Phosphoserine intermediate is S103. Mg(2+) contacts are provided by S103, D243, D245, and D247. The residue at position 103 (S103) is a Phosphoserine.

Belongs to the phosphohexose mutase family. It depends on Mg(2+) as a cofactor. Post-translationally, activated by phosphorylation.

It carries out the reaction alpha-D-glucosamine 1-phosphate = D-glucosamine 6-phosphate. Its function is as follows. Catalyzes the conversion of glucosamine-6-phosphate to glucosamine-1-phosphate. In Lactiplantibacillus plantarum (strain ATCC BAA-793 / NCIMB 8826 / WCFS1) (Lactobacillus plantarum), this protein is Phosphoglucosamine mutase.